The sequence spans 250 residues: Phosphoribosylaminoimidazole-succinocarboxamide synthase (250 aa).

The protein belongs to the SAICAR synthetase family.

It catalyses the reaction 5-amino-1-(5-phospho-D-ribosyl)imidazole-4-carboxylate + L-aspartate + ATP = (2S)-2-[5-amino-1-(5-phospho-beta-D-ribosyl)imidazole-4-carboxamido]succinate + ADP + phosphate + 2 H(+). It participates in purine metabolism; IMP biosynthesis via de novo pathway; 5-amino-1-(5-phospho-D-ribosyl)imidazole-4-carboxamide from 5-amino-1-(5-phospho-D-ribosyl)imidazole-4-carboxylate: step 1/2. The polypeptide is Phosphoribosylaminoimidazole-succinocarboxamide synthase (Bifidobacterium adolescentis (strain ATCC 15703 / DSM 20083 / NCTC 11814 / E194a)).